We begin with the raw amino-acid sequence, 5478 residues long: Mucin-12 (5478 aa).

The N-terminal stretch at 1–16 (MLVIWILTLALRLCAS) is a signal peptide. Residues 17–5380 (VTTVTPEGSA…EFNIAKSLVY (5364 aa)) lie on the Extracellular side of the membrane. N154, N170, and N176 each carry an N-linked (GlcNAc...) asparagine glycan. The segment at 212–737 (LDSSTNSGHS…GSTETTLLPD (526 aa)) is disordered. Repeat unit 1 spans residues 222-240 (EESTVSHSGPGATGTTLFP). Positions 222–4761 (EESTVSHSGP…PGSTQTMHFP (4540 aa)) are 28 X 19 AA approximate tandem repeats of E-E-S-X-X-X-H-X-X-P-X-X-T-X-T-X-X-X-P. 4 stretches are compositionally biased toward polar residues: residues 226–246 (VSHS…SATS), 255–288 (SPIT…SSPR), 296–313 (PART…TSHS), and 325–342 (DSTT…SHSI). The span at 343-366 (PGSTDTTLSPGTTTPSSLGPESTT) shows a compositional bias: low complexity. Over residues 367 to 387 (FHSSPGYTKTTRLPDNTTTSG) the composition is skewed to polar residues. N382 is a glycosylation site (N-linked (GlcNAc...) asparagine). The segment covering 396–413 (HSSTGSPHTTLSPSSSTT) has biased composition (low complexity). Residues 419–440 (TTFQSWPSSKDTSPAPSGTTSA) show a composition bias toward polar residues. Low complexity-rich tracts occupy residues 445–466 (STTY…SSTT) and 478–495 (SSPV…SATS). 2 tandem repeats follow at residues 471 to 489 (EEST…TPPP) and 499 to 517 (EEST…MHFP). The segment covering 531 to 554 (TFHGSTTHTKSSTPSTTAALAHTS) has biased composition (low complexity). Composition is skewed to polar residues over residues 555–575 (YHSS…TISG) and 608–648 (STPS…SPDT). Low complexity predominate over residues 654–669 (SMTSSGVSEESTTSHS). Repeat unit 4 spans residues 662–680 (EESTTSHSRPGSTHTTAFP). 2 stretches are compositionally biased toward polar residues: residues 670-715 (RPGS…TASS) and 722-737 (TFHS…LLPD). N-linked (GlcNAc...) asparagine glycosylation occurs at N738. Disordered stretches follow at residues 749 to 4847 (MPVH…HFTT), 4887 to 5034 (SSRS…THTV), 5048 to 5071 (STAF…TASD), and 5093 to 5112 (ASSS…TSPS). Polar residues-rich tracts occupy residues 751–783 (VHSS…WPSS) and 792–842 (TTTS…TQTM). Repeat unit 5 spans residues 827-845 (EESTTYHSSPGSTQTMHFP). Over residues 859–877 (TSHSSTTHTISSAPSTTSA) the composition is skewed to low complexity. 2 stretches are compositionally biased toward polar residues: residues 884 to 899 (SYHS…HFPD) and 928 to 970 (RSTT…TTFH). Over residues 971–1007 (SSPRSPATTLSPASTTSSGVSEESTTSRSRPGSTHTT) the composition is skewed to low complexity. A compositionally biased stretch (polar residues) spans 1009-1021 (FPDSTTTPGLSRH). Positions 1022 to 1065 (STTSHSSPGSTDTTLLPASTTTSGPSQESTTSHSSSGSTDTALS) are enriched in low complexity. Composition is skewed to polar residues over residues 1066 to 1101 (PGST…TSSG) and 1108 to 1138 (RVHS…TAFQ). The segment covering 1139–1157 (THPASTHTTPSPPSTATAP) has biased composition (low complexity). Repeat unit 6 spans residues 1159 to 1177 (EESTTYHRSPGSTPTTHFP). 2 stretches are compositionally biased toward polar residues: residues 1160 to 1184 (ESTT…TTSG) and 1191 to 1207 (IFHS…SSAH). Low complexity-rich tracts occupy residues 1208–1220 (STTS…TTSR), 1229–1241 (TTLP…PGLS), and 1249–1262 (SSPR…SPAS). Polar residues-rich tracts occupy residues 1271 to 1324 (ESTT…TTSV), 1331 to 1357 (TFHS…TEES), and 1364 to 1377 (PAST…TLTT). 2 stretches are compositionally biased toward low complexity: residues 1384–1396 (STTF…STGT) and 1411–1438 (ESTP…SLSE). Residues 1439–1448 (KSTTFYTSPR) are compositionally biased toward polar residues. The span at 1458–1481 (TTTSSGVSEESSTSHSQPGSTHTT) shows a compositional bias: low complexity. Copy 7 of the repeat occupies 1466–1484 (EESSTSHSQPGSTHTTAFP). The span at 1483-1537 (FPDSTTTSDLSQEPTTSHSSQGSTEATLSPGSTTASSLGQQSTTFHSSPGDTETT) shows a compositional bias: polar residues. Low complexity predominate over residues 1552–1568 (STPTHSSTGSLHTTLTP). Polar residues-rich tracts occupy residues 1569–1586 (ASST…FQSW) and 1606–1630 (VSTT…TTLG). Repeat 8 spans residues 1633–1651 (EESTTVHSSPGATGTALFP). Residues 1653–1708 (RSATSVLVGEPTTSPISSGSTETTALPGSTTTAGLSEKSTTFYSSPRSPDTTLSPA) are compositionally biased toward polar residues. Low complexity predominate over residues 1709 to 1724 (STTSSGVSEESTTSHS). Repeat 9 spans residues 1717–1735 (EESTTSHSRPGSTHTTAFP). Polar residues-rich tracts occupy residues 1725–1797 (RPGS…TTAS) and 1805–1840 (PVHS…SSKD). An N-linked (GlcNAc...) asparagine glycan is attached at N1793. 2 stretches are compositionally biased toward low complexity: residues 1856–1877 (STTS…SSTT) and 1889–1906 (SSPV…STTS). A run of 2 repeats spans residues 1882–1900 (EEST…TPSP) and 1910–1928 (EEST…MHFP). The span at 1914 to 1935 (AYHSSPGSTQTMHFPESSTASG) shows a compositional bias: polar residues. Over residues 1943-1959 (SHSSTTHTISSPPSTTS) the composition is skewed to low complexity. Composition is skewed to polar residues over residues 1967–1982 (SYHS…HFPD) and 2011–2053 (RSTT…TTFH). A compositionally biased stretch (low complexity) spans 2054-2082 (SSPRSPATTLSPASTTSSGVSEESTTSHS). Copy 12 of the repeat occupies 2075-2093 (EESTTSHSRPGSTHTTAFP). Residues 2083-2104 (RPGSTHTTAFPDSTTTPGLSRH) are compositionally biased toward polar residues. Residues 2105 to 2130 (STTSHSSPGSTDTTLLPASTTTSGPS) show a composition bias toward low complexity. Composition is skewed to polar residues over residues 2131–2184 (QEST…TSSG) and 2191–2221 (RVHS…TAFQ). The segment covering 2222-2240 (THPASTHTTPSPPSTATAP) has biased composition (low complexity). The stretch at 2242 to 2260 (EESTTYHRSPGSTPTTHFP) is repeat 13. Polar residues-rich tracts occupy residues 2243-2267 (ESTT…TTSG) and 2274-2290 (IFHS…SSAH). Composition is skewed to low complexity over residues 2291–2303 (STTS…TTSR), 2312–2324 (TTLP…PGLS), and 2332–2345 (SSPR…SPAS). A compositionally biased stretch (polar residues) spans 2354-2392 (ESTTSRSQPGSTHSTVSPASTTTPGLSEESTTVYSSSPG). The segment covering 2393-2407 (STETTVFPRTPTTSV) has biased composition (low complexity). Polar residues-rich tracts occupy residues 2414-2440 (TFHS…TEES) and 2447-2460 (PAST…TLTT). Composition is skewed to low complexity over residues 2467–2483 (STTF…TLSP) and 2494–2521 (ESTP…SLSE). A compositionally biased stretch (polar residues) spans 2522–2531 (KSTTFYTSPR). Over residues 2541 to 2564 (TTTSSGVSEESSTSHSQPGSTHTT) the composition is skewed to low complexity. The stretch at 2549–2567 (EESSTSHSQPGSTHTTAFP) is repeat 14. The span at 2566–2578 (FPDSTTTPGLSRH) shows a compositional bias: polar residues. Residues 2579–2604 (STTSHSSPGSTDTTLLPASTTTSGPS) show a composition bias toward low complexity. Composition is skewed to polar residues over residues 2605 to 2658 (QEST…TSSG) and 2665 to 2695 (RVHS…TTFQ). A compositionally biased stretch (low complexity) spans 2696–2714 (THPASTHTTPSPPSTATAP). Repeat unit 15 spans residues 2716–2734 (EESTTYHRSPGSTPTTHFP). Composition is skewed to polar residues over residues 2717-2741 (ESTT…TTSG) and 2748-2764 (IFHS…SSAH). Low complexity-rich tracts occupy residues 2765-2777 (STTS…TTSR), 2786-2798 (TTLP…PGLS), and 2806-2819 (SSPR…SPAS). Composition is skewed to polar residues over residues 2828-2881 (ESTT…TTSV), 2888-2914 (TFHS…TEES), and 2921-2934 (PAST…TLTT). 2 stretches are compositionally biased toward low complexity: residues 2941 to 2957 (STTF…TLSP) and 2968 to 2995 (ESTP…SLSE). Over residues 2996–3005 (KSTTFYTSPR) the composition is skewed to polar residues. A compositionally biased stretch (low complexity) spans 3015–3038 (TTTSSGVSEESSTSHSQPGSTHTT). Residues 3023 to 3041 (EESSTSHSQPGSTHTTAFP) form repeat 16. Residues 3040 to 3094 (FPDSTTTSGLSQEPTASHSSQGSTEATLSPGSTTASSLGQQSTTFHSSPGDTETT) show a composition bias toward polar residues. Residues 3109–3125 (STPTHSSTGSLHTTLTP) show a composition bias toward low complexity. Polar residues-rich tracts occupy residues 3126–3143 (ASST…FQSW) and 3163–3187 (VSTT…TTLG). The stretch at 3190 to 3208 (EESTTVHSSPGATGTALFP) is repeat 17. Over residues 3210-3265 (RSATSVLVGEPTTSPISSGSTETTALPGSTTTAGLSEKSTTFYSSPRSPDTTLSPA) the composition is skewed to polar residues. Positions 3266 to 3281 (STTSSGVSEESTTSHS) are enriched in low complexity. Repeat unit 18 spans residues 3274–3292 (EESTTSHSRPGSTHTTAFP). Composition is skewed to polar residues over residues 3282–3354 (RPGS…TTAS) and 3362–3397 (PVHS…NSKD). Residue N3350 is glycosylated (N-linked (GlcNAc...) asparagine). 2 stretches are compositionally biased toward low complexity: residues 3413-3434 (STTS…SSTT) and 3446-3463 (SSPV…STTS). A run of 2 repeats spans residues 3439-3457 (EEST…TPSP) and 3467-3485 (EEST…MHFP). Residues 3468–3482 (ESTTYHSSPGSTQTM) are compositionally biased toward polar residues. Positions 3499–3517 (TSHSSTTHTISSAPSTTSA) are enriched in low complexity. 2 stretches are compositionally biased toward polar residues: residues 3524 to 3539 (SYHS…HFPD) and 3568 to 3610 (RSTT…TTFH). Positions 3611 to 3639 (SSPRSPATTLSPASTTSSGVSEESTTSHS) are enriched in low complexity. The stretch at 3632–3650 (EESTTSHSRPGSTHTTAFP) is repeat 21. The segment covering 3640-3661 (RPGSTHTTAFPDSTTTPGLSRH) has biased composition (polar residues). Low complexity predominate over residues 3662 to 3705 (STTSHSSPGSTDTTLLPASTTTSGSSQESTTSHSSSGSTDTALS). Polar residues-rich tracts occupy residues 3706-3741 (PGST…TSSG) and 3748-3778 (RVHS…TAFQ). Residues 3779-3797 (THPASTHTTPSPPSTATAP) are compositionally biased toward low complexity. Repeat 22 spans residues 3799–3817 (EESTTYHRSPGSTPTTHFP). 2 stretches are compositionally biased toward polar residues: residues 3800-3824 (ESTT…TTSG) and 3831-3847 (IFHS…SSAH). 3 stretches are compositionally biased toward low complexity: residues 3848–3860 (STTS…TTSR), 3869–3881 (TTLP…PGLS), and 3889–3902 (SSPR…SPAS). Polar residues-rich tracts occupy residues 3911–3963 (ESTT…TTTS), 3971–3997 (TFHS…TEES), and 4004–4017 (PAST…TLTT). Low complexity-rich tracts occupy residues 4024–4036 (STTF…STGT) and 4051–4078 (ESTP…SLSE). Over residues 4079–4088 (KSTTFYTSPR) the composition is skewed to polar residues. Positions 4098 to 4121 (TTTSSGVSEESSTSHSQPGSTHTT) are enriched in low complexity. Repeat unit 23 spans residues 4106–4124 (EESSTSHSQPGSTHTTAFP). Polar residues predominate over residues 4123–4177 (FPDSTTTSGLSQEPTTSHSSQGSTEATLSPGSTTASSLGQQSTTFHSSPGDTETT). A compositionally biased stretch (low complexity) spans 4192–4208 (STPTHSSTGSLHTTLTP). The segment covering 4209 to 4226 (ASSTSTGLQEESTTFQSW) has biased composition (polar residues). The segment covering 4227-4249 (PSSSDTTPSPPSTTAVPVEVSTT) has biased composition (low complexity). Residues 4250 to 4270 (YHSRPSSTPTTHFSASSTTLG) show a composition bias toward polar residues. The stretch at 4273–4291 (EESTTVHSSPGATGTALFP) is repeat 24. Positions 4293–4348 (RSATSVLVGEPTTSPISSGSTETTALPGSTTTAGLSEKSTTFYSSPRSPDTTLSPA) are enriched in polar residues. Residues 4349–4364 (STTSSGVSEESTTSHS) are compositionally biased toward low complexity. Composition is skewed to polar residues over residues 4369 to 4437 (MHTT…TTAS) and 4445 to 4480 (PVHS…NSKD). N4433 carries N-linked (GlcNAc...) asparagine glycosylation. 2 stretches are compositionally biased toward low complexity: residues 4496–4517 (STTS…SSTT) and 4529–4546 (SSPV…STTS). 2 tandem repeats follow at residues 4522 to 4540 (EEST…TPSP) and 4550 to 4568 (EEST…MHFP). The segment covering 4551–4571 (ESTTYHSSPGSTQTMHFPESN) has biased composition (polar residues). Residue N4571 is glycosylated (N-linked (GlcNAc...) asparagine). A compositionally biased stretch (low complexity) spans 4582–4600 (TSHSSTTHTISSAPSTTSA). Polar residues-rich tracts occupy residues 4607–4622 (SYHS…HFPD) and 4651–4688 (RSTT…LSEK). Low complexity-rich tracts occupy residues 4689-4710 (STTF…SSTT) and 4722-4739 (SSPV…STTS). Tandem repeats lie at residues 4715–4733 (EEST…TPSP) and 4743–4761 (EEST…MHFP). The segment covering 4747–4768 (AYHSSPGSTQTMHFPESSTASG) has biased composition (polar residues). The span at 4776 to 4792 (SHSSTTHTISSPPSTTS) shows a compositional bias: low complexity. Polar residues-rich tracts occupy residues 4800–4814 (SYHS…THFP) and 4887–4917 (SSRS…SQAE). Residues 4918–4931 (STHTTAFPASTTTS) show a composition bias toward low complexity. 2 stretches are compositionally biased toward polar residues: residues 4932–5024 (GLSQ…STPF) and 5048–5061 (STAF…TGTT). The span at 5094–5112 (SSSTSGLTEESTTFHTSPS) shows a compositional bias: low complexity. The EGF-like domain maps to 5116-5154 (TIVSTESLETLAPGLCQEGQIWNGKQCVCPQGYVGYQCL). The cysteines at positions 5144 and 5153 are disulfide-linked. In terms of domain architecture, SEA spans 5168–5275 (LNATLGMTVK…TRTTLLDPDS (108 aa)). N-linked (GlcNAc...) asparagine glycosylation is found at N5169, N5182, N5197, N5228, and N5264. The Cleavage motif motif lies at 5226–5233 (LLNGSIVV). Residues 5381–5401 (GIVGAVMAVLLLALIILIILF) traverse the membrane as a helical segment. Topologically, residues 5402–5478 (SLSQRKRHRE…QRPEMVASTV (77 aa)) are cytoplasmic.

Ubiquitous, with higher expression in colon. Down-regulated in colorectal cancer as well as in the colon of patients with ulcerative colitis (UC) and Crohn's disease (CD).

It is found in the membrane. In terms of biological role, involved in epithelial cell protection, adhesion modulation, and signaling. May be involved in epithelial cell growth regulation. Stimulated by both cytokine TNF-alpha and TGF-beta in intestinal epithelium. In Homo sapiens (Human), this protein is Mucin-12 (MUC12).